The primary structure comprises 427 residues: 3-phosphoshikimate 1-carboxyvinyltransferase (427 aa).

Residues K20, S21, and R25 each coordinate 3-phosphoshikimate. Position 20 (K20) interacts with phosphoenolpyruvate. Phosphoenolpyruvate-binding residues include G92 and R120. Residues S166, Q168, D312, and K339 each contribute to the 3-phosphoshikimate site. Position 168 (Q168) interacts with phosphoenolpyruvate. D312 acts as the Proton acceptor in catalysis. Residues R343 and R385 each contribute to the phosphoenolpyruvate site.

Belongs to the EPSP synthase family. Monomer.

It is found in the cytoplasm. It catalyses the reaction 3-phosphoshikimate + phosphoenolpyruvate = 5-O-(1-carboxyvinyl)-3-phosphoshikimate + phosphate. It functions in the pathway metabolic intermediate biosynthesis; chorismate biosynthesis; chorismate from D-erythrose 4-phosphate and phosphoenolpyruvate: step 6/7. Catalyzes the transfer of the enolpyruvyl moiety of phosphoenolpyruvate (PEP) to the 5-hydroxyl of shikimate-3-phosphate (S3P) to produce enolpyruvyl shikimate-3-phosphate and inorganic phosphate. The protein is 3-phosphoshikimate 1-carboxyvinyltransferase of Streptococcus sanguinis (strain SK36).